Consider the following 349-residue polypeptide: Hydroxymethylglutaryl-CoA synthase (349 aa).

Position 30 (Asp-30) interacts with (3S)-3-hydroxy-3-methylglutaryl-CoA. The Proton donor/acceptor role is filled by Glu-82. Cys-114 contacts (3S)-3-hydroxy-3-methylglutaryl-CoA. The active-site Acyl-thioester intermediate is the Cys-114. Arg-203 is a CoA binding site. Residues Thr-205 and His-238 each contribute to the (3S)-3-hydroxy-3-methylglutaryl-CoA site. His-238 acts as the Proton donor/acceptor in catalysis. A CoA-binding site is contributed by Lys-243. (3S)-3-hydroxy-3-methylglutaryl-CoA is bound by residues Lys-247, Asn-270, and Ser-300.

It belongs to the thiolase-like superfamily. Archaeal HMG-CoA synthase family. In terms of assembly, interacts with acetoacetyl-CoA thiolase that catalyzes the precedent step in the pathway and with a DUF35 protein. The acetoacetyl-CoA thiolase/HMG-CoA synthase complex channels the intermediate via a fused CoA-binding site, which allows for efficient coupling of the endergonic thiolase reaction with the exergonic HMGCS reaction.

The enzyme catalyses acetoacetyl-CoA + acetyl-CoA + H2O = (3S)-3-hydroxy-3-methylglutaryl-CoA + CoA + H(+). Its pathway is metabolic intermediate biosynthesis; (R)-mevalonate biosynthesis; (R)-mevalonate from acetyl-CoA: step 2/3. Its function is as follows. Catalyzes the condensation of acetyl-CoA with acetoacetyl-CoA to form 3-hydroxy-3-methylglutaryl-CoA (HMG-CoA). Functions in the mevalonate (MVA) pathway leading to isopentenyl diphosphate (IPP), a key precursor for the biosynthesis of isoprenoid compounds that are building blocks of archaeal membrane lipids. This chain is Hydroxymethylglutaryl-CoA synthase, found in Methanothermococcus thermolithotrophicus (Methanococcus thermolithotrophicus).